The sequence spans 602 residues: MEKEVIAYLDNETIIDSQSVKNTNLKEIYFDNSKESLEVIRHSCAHLMAQAIKNLYPEAKFFVGPVIEDGFYYDFRVESKIGEEDLVKIEKKMKELAEAKIEISKYEITKNEALAKFQNDDLKQEVLLRIPDGAVSIYKQGEFEDLCRGPHVPNTKFLRFFKLTRVAGAYLGGDEKREMLTRIYGTAFADKESLKEYLTIIEEAKKRDHRKLGTELKLFTFDDEIGGGLPIWLSNGARLRSKLEHILYKIHRLRGYEPVRGPELLKADAWKISGHYANYKENMYFTQIDEQEYGIKPMNCVGHIKIYQSDVRSYRDLPLKFFEYGVVHRHEKSGVLHGLFRVREFTQDDAHIFCMPSQIKEQVLEILAFVDNLMKLFDFSYEMEISTKPEKAIGDDEIWEVATKALKEALDEQGLKYGIDEGGGAFYGPKIDIKITDALKRKWQCGTIQVDFNLPSRFKLEYTDSDNEKKQPVMLHRAILGSFERFIGILTEHCAGEFPFFIAPTAVGIVPIGEAHIAYAKEIQKELLELNIDSEVYEKNESLSKKIRTAEKQKLPMILVLGDDEVAKRSVALRDRRAKEQKNLSLDEFIKLVKEKMSEVHF.

A catalytic region spans residues D208–P499. Positions 300, 351, and 476 each coordinate Zn(2+).

This sequence belongs to the class-II aminoacyl-tRNA synthetase family. As to quaternary structure, homodimer. The cofactor is Zn(2+).

It is found in the cytoplasm. It carries out the reaction tRNA(Thr) + L-threonine + ATP = L-threonyl-tRNA(Thr) + AMP + diphosphate + H(+). Functionally, catalyzes the attachment of threonine to tRNA(Thr) in a two-step reaction: L-threonine is first activated by ATP to form Thr-AMP and then transferred to the acceptor end of tRNA(Thr). Also edits incorrectly charged L-seryl-tRNA(Thr). The sequence is that of Threonine--tRNA ligase from Campylobacter jejuni subsp. jejuni serotype O:6 (strain 81116 / NCTC 11828).